A 173-amino-acid chain; its full sequence is Probable lipoprotein EnvE (173 aa).

An N-terminal signal peptide occupies residues 1 to 20; the sequence is MTLLSGKTTLVLCLSSILCG. Residue cysteine 21 is the site of N-palmitoyl cysteine attachment. Cysteine 21 is lipidated: S-diacylglycerol cysteine.

It localises to the cell membrane. The sequence is that of Probable lipoprotein EnvE (envE) from Salmonella typhimurium (strain LT2 / SGSC1412 / ATCC 700720).